Consider the following 430-residue polypeptide: Serine--tRNA ligase (430 aa).

L-serine is bound at residue 237 to 239 (TAE). 268-270 (RSE) provides a ligand contact to ATP. Glu-291 lines the L-serine pocket. Position 355–358 (355–358 (EISS)) interacts with ATP. Ser-391 contributes to the L-serine binding site.

Belongs to the class-II aminoacyl-tRNA synthetase family. Type-1 seryl-tRNA synthetase subfamily. Homodimer. The tRNA molecule binds across the dimer.

The protein resides in the cytoplasm. It catalyses the reaction tRNA(Ser) + L-serine + ATP = L-seryl-tRNA(Ser) + AMP + diphosphate + H(+). The enzyme catalyses tRNA(Sec) + L-serine + ATP = L-seryl-tRNA(Sec) + AMP + diphosphate + H(+). The protein operates within aminoacyl-tRNA biosynthesis; selenocysteinyl-tRNA(Sec) biosynthesis; L-seryl-tRNA(Sec) from L-serine and tRNA(Sec): step 1/1. Functionally, catalyzes the attachment of serine to tRNA(Ser). Is also able to aminoacylate tRNA(Sec) with serine, to form the misacylated tRNA L-seryl-tRNA(Sec), which will be further converted into selenocysteinyl-tRNA(Sec). This chain is Serine--tRNA ligase, found in Yersinia enterocolitica serotype O:8 / biotype 1B (strain NCTC 13174 / 8081).